Reading from the N-terminus, the 641-residue chain is Chaperone protein DnaK (641 aa).

A Phosphothreonine; by autocatalysis modification is found at threonine 200. A compositionally biased stretch (low complexity) spans 605–623; it reads AAEQGGSADAASGNAQASK. The tract at residues 605-628 is disordered; it reads AAEQGGSADAASGNAQASKAADDV.

The protein belongs to the heat shock protein 70 family.

In terms of biological role, acts as a chaperone. This is Chaperone protein DnaK from Xanthomonas oryzae pv. oryzae (strain KACC10331 / KXO85).